Consider the following 146-residue polypeptide: Large ribosomal subunit protein uL15 (146 aa).

The segment covering 1–10 (MTIKLHDLKP) has biased composition (basic and acidic residues). Residues 1–52 (MTIKLHDLKPARGSKTPRTRVGRGEGSKGKTAGRGTKGTKARKNVPVTFEGG) are disordered.

Belongs to the universal ribosomal protein uL15 family. Part of the 50S ribosomal subunit.

Functionally, binds to the 23S rRNA. This is Large ribosomal subunit protein uL15 from Mycolicibacterium paratuberculosis (strain ATCC BAA-968 / K-10) (Mycobacterium paratuberculosis).